An 893-amino-acid polypeptide reads, in one-letter code: Translation initiation factor IF-2 (893 aa).

The disordered stretch occupies residues 1–266 (MVDTKNPGDK…AKPAPSKQRG (266 aa)). Positions 59-70 (PADAPTAAAAAP) are enriched in low complexity. A compositionally biased stretch (pro residues) spans 71–92 (APAPAPVPSAAPRPAAPPPPSR). The segment covering 93-104 (PQQSRSQSPSRS) has biased composition (low complexity). Composition is skewed to basic and acidic residues over residues 128–148 (ARVR…RRNS) and 155–196 (AERE…EAKR). A compositionally biased stretch (low complexity) spans 197–226 (PAAAATPAKSATPAARPTGAPAVRAPGVAA). The tr-type G domain maps to 389–560 (PRSPVVTVMG…ALQAELLDLK (172 aa)). A G1 region spans residues 398–405 (GHVDHGKT). A GTP-binding site is contributed by 398-405 (GHVDHGKT). Positions 423–427 (GITQH) are G2. Residues 446–449 (DTPG) are G3. GTP-binding positions include 446–450 (DTPGH) and 500–503 (NKID). The tract at residues 500–503 (NKID) is G4. The interval 536-538 (SAK) is G5.

The protein belongs to the TRAFAC class translation factor GTPase superfamily. Classic translation factor GTPase family. IF-2 subfamily.

The protein localises to the cytoplasm. In terms of biological role, one of the essential components for the initiation of protein synthesis. Protects formylmethionyl-tRNA from spontaneous hydrolysis and promotes its binding to the 30S ribosomal subunits. Also involved in the hydrolysis of GTP during the formation of the 70S ribosomal complex. The chain is Translation initiation factor IF-2 from Rhodopseudomonas palustris (strain BisA53).